The chain runs to 232 residues: Enolase-phosphatase E1 (232 aa).

This sequence belongs to the HAD-like hydrolase superfamily. MasA/MtnC family. Monomer. Mg(2+) serves as cofactor.

It catalyses the reaction 5-methylsulfanyl-2,3-dioxopentyl phosphate + H2O = 1,2-dihydroxy-5-(methylsulfanyl)pent-1-en-3-one + phosphate. It participates in amino-acid biosynthesis; L-methionine biosynthesis via salvage pathway; L-methionine from S-methyl-5-thio-alpha-D-ribose 1-phosphate: step 3/6. The protein operates within amino-acid biosynthesis; L-methionine biosynthesis via salvage pathway; L-methionine from S-methyl-5-thio-alpha-D-ribose 1-phosphate: step 4/6. In terms of biological role, bifunctional enzyme that catalyzes the enolization of 2,3-diketo-5-methylthiopentyl-1-phosphate (DK-MTP-1-P) into the intermediate 2-hydroxy-3-keto-5-methylthiopentenyl-1-phosphate (HK-MTPenyl-1-P), which is then dephosphorylated to form the acireductone 1,2-dihydroxy-3-keto-5-methylthiopentene (DHK-MTPene). In Xanthomonas axonopodis pv. citri (strain 306), this protein is Enolase-phosphatase E1.